Here is a 78-residue protein sequence, read N- to C-terminus: Exodeoxyribonuclease 7 small subunit (78 aa).

This sequence belongs to the XseB family. As to quaternary structure, heterooligomer composed of large and small subunits.

It is found in the cytoplasm. It carries out the reaction Exonucleolytic cleavage in either 5'- to 3'- or 3'- to 5'-direction to yield nucleoside 5'-phosphates.. Bidirectionally degrades single-stranded DNA into large acid-insoluble oligonucleotides, which are then degraded further into small acid-soluble oligonucleotides. This is Exodeoxyribonuclease 7 small subunit from Oceanobacillus iheyensis (strain DSM 14371 / CIP 107618 / JCM 11309 / KCTC 3954 / HTE831).